A 221-amino-acid polypeptide reads, in one-letter code: Stromal cell-derived factor 2-like protein 1 (221 aa).

An N-terminal signal peptide occupies residues 1-28 (MWSAGRGGAAWPVLLGLLLALLVPGGGA). MIR domains are found at residues 33–87 (AELV…IRGG), 95–150 (GSPV…VRCS), and 151–205 (GQHW…AMEG). Residue S215 is modified to Phosphoserine. The Prevents secretion from ER motif lies at 218-221 (HDEL).

As to quaternary structure, part of a large chaperone multiprotein complex comprising CABP1, DNAJB11, HSP90B1, HSPA5, HYOU, PDIA2, PDIA4, PPIB, SDF2L1, UGGT1 and very small amounts of ERP29, but not, or at very low levels, CALR nor CANX. Ubiquitously expressed with high expression in testis, moderate expression in the pancreas, spleen, prostate, small intestine and colon. Very low expression is seen in brain and skeletal muscle.

Its subcellular location is the endoplasmic reticulum lumen. In Homo sapiens (Human), this protein is Stromal cell-derived factor 2-like protein 1 (SDF2L1).